The following is a 106-amino-acid chain: UPF0122 protein Exig_1902 (106 aa).

This sequence belongs to the UPF0122 family.

Its function is as follows. Might take part in the signal recognition particle (SRP) pathway. This is inferred from the conservation of its genetic proximity to ftsY/ffh. May be a regulatory protein. In Exiguobacterium sibiricum (strain DSM 17290 / CCUG 55495 / CIP 109462 / JCM 13490 / 255-15), this protein is UPF0122 protein Exig_1902.